A 324-amino-acid chain; its full sequence is Succinylglutamate desuccinylase (324 aa).

His53, Glu56, and His148 together coordinate Zn(2+). Glu211 is an active-site residue.

It belongs to the AspA/AstE family. Succinylglutamate desuccinylase subfamily. It depends on Zn(2+) as a cofactor.

The catalysed reaction is N-succinyl-L-glutamate + H2O = L-glutamate + succinate. It participates in amino-acid degradation; L-arginine degradation via AST pathway; L-glutamate and succinate from L-arginine: step 5/5. Its function is as follows. Transforms N(2)-succinylglutamate into succinate and glutamate. The chain is Succinylglutamate desuccinylase from Acinetobacter baumannii (strain AB0057).